A 343-amino-acid polypeptide reads, in one-letter code: Ribosomal RNA small subunit methyltransferase C (343 aa).

It belongs to the methyltransferase superfamily. RsmC family. In terms of assembly, monomer.

The protein localises to the cytoplasm. The catalysed reaction is guanosine(1207) in 16S rRNA + S-adenosyl-L-methionine = N(2)-methylguanosine(1207) in 16S rRNA + S-adenosyl-L-homocysteine + H(+). Its function is as follows. Specifically methylates the guanine in position 1207 of 16S rRNA in the 30S particle. The sequence is that of Ribosomal RNA small subunit methyltransferase C from Shigella flexneri.